The sequence spans 404 residues: Cysteine desulfurase IscS (404 aa).

Residues 75 to 76, Asn-155, Gln-183, and 203 to 205 each bind pyridoxal 5'-phosphate; these read AT and SSH. Residue Lys-206 is modified to N6-(pyridoxal phosphate)lysine. Residue Thr-243 coordinates pyridoxal 5'-phosphate. Catalysis depends on Cys-328, which acts as the Cysteine persulfide intermediate. Cys-328 is a [2Fe-2S] cluster binding site.

Belongs to the class-V pyridoxal-phosphate-dependent aminotransferase family. NifS/IscS subfamily. In terms of assembly, homodimer. Forms a heterotetramer with IscU, interacts with other sulfur acceptors. Pyridoxal 5'-phosphate is required as a cofactor.

The protein localises to the cytoplasm. The catalysed reaction is (sulfur carrier)-H + L-cysteine = (sulfur carrier)-SH + L-alanine. It functions in the pathway cofactor biosynthesis; iron-sulfur cluster biosynthesis. Its function is as follows. Master enzyme that delivers sulfur to a number of partners involved in Fe-S cluster assembly, tRNA modification or cofactor biosynthesis. Catalyzes the removal of elemental sulfur atoms from cysteine to produce alanine. Functions as a sulfur delivery protein for Fe-S cluster synthesis onto IscU, an Fe-S scaffold assembly protein, as well as other S acceptor proteins. This Haemophilus influenzae (strain PittEE) protein is Cysteine desulfurase IscS.